The sequence spans 741 residues: Phosphoribosylformylglycinamidine synthase subunit PurL (741 aa).

The active site involves histidine 54. Residues tyrosine 57 and lysine 96 each contribute to the ATP site. Glutamate 98 contributes to the Mg(2+) binding site. Substrate is bound by residues serine 99–histidine 102 and arginine 121. The Proton acceptor role is filled by histidine 100. Aspartate 122 provides a ligand contact to Mg(2+). Residue glutamine 245 participates in substrate binding. Residue aspartate 273 participates in Mg(2+) binding. Glutamate 317 to glutamine 319 lines the substrate pocket. Residues aspartate 500 and glycine 537 each coordinate ATP. Asparagine 538 is a binding site for Mg(2+). Residue serine 540 coordinates substrate.

This sequence belongs to the FGAMS family. As to quaternary structure, monomer. Part of the FGAM synthase complex composed of 1 PurL, 1 PurQ and 2 PurS subunits.

The protein resides in the cytoplasm. It catalyses the reaction N(2)-formyl-N(1)-(5-phospho-beta-D-ribosyl)glycinamide + L-glutamine + ATP + H2O = 2-formamido-N(1)-(5-O-phospho-beta-D-ribosyl)acetamidine + L-glutamate + ADP + phosphate + H(+). It functions in the pathway purine metabolism; IMP biosynthesis via de novo pathway; 5-amino-1-(5-phospho-D-ribosyl)imidazole from N(2)-formyl-N(1)-(5-phospho-D-ribosyl)glycinamide: step 1/2. Part of the phosphoribosylformylglycinamidine synthase complex involved in the purines biosynthetic pathway. Catalyzes the ATP-dependent conversion of formylglycinamide ribonucleotide (FGAR) and glutamine to yield formylglycinamidine ribonucleotide (FGAM) and glutamate. The FGAM synthase complex is composed of three subunits. PurQ produces an ammonia molecule by converting glutamine to glutamate. PurL transfers the ammonia molecule to FGAR to form FGAM in an ATP-dependent manner. PurS interacts with PurQ and PurL and is thought to assist in the transfer of the ammonia molecule from PurQ to PurL. This chain is Phosphoribosylformylglycinamidine synthase subunit PurL, found in Shouchella clausii (strain KSM-K16) (Alkalihalobacillus clausii).